The chain runs to 157 residues: Protein MG115 (157 aa).

The protein belongs to the CinA family.

In Mycoplasma genitalium (strain ATCC 33530 / DSM 19775 / NCTC 10195 / G37) (Mycoplasmoides genitalium), this protein is Protein MG115.